The following is a 509-amino-acid chain: Movement protein (509 aa).

The protein localises to the host cell junction. It localises to the host plasmodesma. It is found in the host cytoplasm. In terms of biological role, transports viral genome to neighboring plant cells directly through plasmosdesmata, without any budding. The movement protein allows efficient cell to cell propagation, by bypassing the host cell wall barrier. The chain is Movement protein from Rice dwarf virus (isolate Fujian) (RDV).